We begin with the raw amino-acid sequence, 582 residues long: Frizzled-10 (582 aa).

The N-terminal stretch at M1–A21 is a signal peptide. Over I22–R226 the chain is Extracellular. Positions P30–A151 constitute an FZ domain. 5 cysteine pairs are disulfide-bonded: C35–C96, C43–C89, C80–C118, C107–C148, and C111–C135. N49 carries an N-linked (GlcNAc...) asparagine glycan. The interval N153–G189 is disordered. N154 carries an N-linked (GlcNAc...) asparagine glycan. The helical transmembrane segment at F227 to V247 threads the bilayer. At L248 to P263 the chain is on the cytoplasmic side. The chain crosses the membrane as a helical span at residues I264–A284. The Extracellular portion of the chain corresponds to G285–L312. A helical transmembrane segment spans residues V313 to L333. Topologically, residues T334 to S352 are cytoplasmic. The helical transmembrane segment at S353–M373 threads the bilayer. The Extracellular portion of the chain corresponds to R374–A394. A helical transmembrane segment spans residues L395 to L415. Residues S416–R444 are Cytoplasmic-facing. Residues I445–Y465 traverse the membrane as a helical segment. Residues E466–E503 are Extracellular-facing. N486 is a glycosylation site (N-linked (GlcNAc...) asparagine). The chain crosses the membrane as a helical span at residues V504–W524. Topologically, residues T525–V582 are cytoplasmic. Positions K527 to W532 match the Lys-Thr-X-X-X-Trp motif, mediates interaction with the PDZ domain of Dvl family members motif. The segment at A561–V582 is disordered. Residues A580–V582 carry the PDZ-binding motif.

Belongs to the G-protein coupled receptor Fz/Smo family. In terms of assembly, interacts with MYOC. Interacts with WNT7B. Post-translationally, ubiquitinated by ZNRF3, leading to its degradation by the proteasome.

It is found in the cell membrane. Receptor for Wnt proteins. Functions in the canonical Wnt/beta-catenin signaling pathway. The canonical Wnt/beta-catenin signaling pathway leads to the activation of disheveled proteins, inhibition of GSK-3 kinase, nuclear accumulation of beta-catenin and activation of Wnt target genes. A second signaling pathway involving PKC and calcium fluxes has been seen for some family members, but it is not yet clear if it represents a distinct pathway or if it can be integrated in the canonical pathway, as PKC seems to be required for Wnt-mediated inactivation of GSK-3 kinase. Both pathways seem to involve interactions with G-proteins. May be involved in transduction and intercellular transmission of polarity information during tissue morphogenesis and/or in differentiated tissues. This chain is Frizzled-10 (Fzd10), found in Mus musculus (Mouse).